A 92-amino-acid chain; its full sequence is MMKVIPLGERLLIKPIKEEKKTEGGIVLPDSAKEKPMKAEVVAVGKIDDDEKFDIKVGDKVIYSKYAGTEIKIDDEDYIIIDVNDILAKIEE.

Belongs to the GroES chaperonin family. In terms of assembly, heptamer of 7 subunits arranged in a ring. Interacts with the chaperonin GroEL.

It is found in the cytoplasm. Its function is as follows. Together with the chaperonin GroEL, plays an essential role in assisting protein folding. The GroEL-GroES system forms a nano-cage that allows encapsulation of the non-native substrate proteins and provides a physical environment optimized to promote and accelerate protein folding. GroES binds to the apical surface of the GroEL ring, thereby capping the opening of the GroEL channel. The protein is Co-chaperonin GroES of Thermotoga maritima (strain ATCC 43589 / DSM 3109 / JCM 10099 / NBRC 100826 / MSB8).